We begin with the raw amino-acid sequence, 979 residues long: UPF0182 protein Mb0065 (979 aa).

7 helical membrane-spanning segments follow: residues 19-41, 63-85, 114-136, 174-196, 208-230, 261-280, and 285-307; these read LVTAGMGMLALLLFGPRLVDIYV, LAIVAAVALVVAGIVLAALLLAY, LFGWGIAVTLGVVCGLIASFDWV, WLFVAVVLAFLASLLTHYLFGGL, AARVQLAVFAGAVVLLKAVAYWL, LVLVAIAVLCAVSFFTAIFL, and IPAMAAALLVLSAILVGGLWPLL. The interval 898 to 948 is disordered; the sequence is GTGRVATAPGGDAASAPPPGAGGPAPPQAVPPPRTTQPPAAPPRGPDVPPA. Residues 902-912 show a composition bias toward low complexity; it reads VATAPGGDAAS. Over residues 913-946 the composition is skewed to pro residues; the sequence is APPPGAGGPAPPQAVPPPRTTQPPAAPPRGPDVP.

This sequence belongs to the UPF0182 family.

Its subcellular location is the cell membrane. The sequence is that of UPF0182 protein Mb0065 from Mycobacterium bovis (strain ATCC BAA-935 / AF2122/97).